The following is an 89-amino-acid chain: Small ribosomal subunit protein uS15 (89 aa).

This sequence belongs to the universal ribosomal protein uS15 family. As to quaternary structure, part of the 30S ribosomal subunit. Forms a bridge to the 50S subunit in the 70S ribosome, contacting the 23S rRNA.

One of the primary rRNA binding proteins, it binds directly to 16S rRNA where it helps nucleate assembly of the platform of the 30S subunit by binding and bridging several RNA helices of the 16S rRNA. Its function is as follows. Forms an intersubunit bridge (bridge B4) with the 23S rRNA of the 50S subunit in the ribosome. The sequence is that of Small ribosomal subunit protein uS15 from Parvibaculum lavamentivorans (strain DS-1 / DSM 13023 / NCIMB 13966).